Reading from the N-terminus, the 240-residue chain is Lactate utilization protein C (240 aa).

This sequence belongs to the LutC/YkgG family.

Functionally, is involved in L-lactate degradation and allows cells to grow with lactate as the sole carbon source. This chain is Lactate utilization protein C, found in Bacillus pumilus (strain SAFR-032).